A 78-amino-acid chain; its full sequence is Defensin-like protein 308 (78 aa).

Positions 1 to 19 are cleaved as a signal peptide; it reads MKTSAFFIAVLLILSCSSS. Cystine bridges form between Cys-31-Cys-50, Cys-37-Cys-55, and Cys-41-Cys-57.

The protein belongs to the DEFL family.

Its subcellular location is the secreted. This Arabidopsis thaliana (Mouse-ear cress) protein is Defensin-like protein 308.